The primary structure comprises 126 residues: Membrane-anchored ubiquitin-fold protein 2 (126 aa).

Residues 14 to 79 (VEVRFRLDDG…VLENNRTLAE (66 aa)) form the Ubiquitin-like domain. Cys123 carries the cysteine methyl ester modification. Cys123 carries the S-geranylgeranyl cysteine lipid modification. Positions 124–126 (TIL) are cleaved as a propeptide — removed in mature form.

The protein localises to the cell membrane. May serve as docking site to facilitate the association of other proteins to the plasma membrane. This Oryza sativa subsp. japonica (Rice) protein is Membrane-anchored ubiquitin-fold protein 2 (MUB2).